Here is a 455-residue protein sequence, read N- to C-terminus: MHLYQLEDELKKNVFCREDQIKKLSCLLFNKDCRVPSIVLYGVASTAKTFLLRTAFDLSKEENVWINLQDCFTVAHFWYRILIKVGVDKDIALKKGINISGFIYLLEQAMSKRDYHTFLVLDQIDDFAEASTILFSQLAQLPIVANIPNLSIIFVLHSHPAQYLGTLSIAVIFFPQYTQAEILEICQKTPPNLDFLDRSGDSVFEDEIELSVWMQYCSFLWSVFGVQCLNDYRSFRSVLDRYWPKFIQPIVEGDIHPADYAQLHKLAKNFLVSDATVTKRLHIINPTEIKNLLDSKSINLSLVSKYLLVSAFLASYNPSRLDAQFFSFSKTSKRRGRKRKQIQDEGVLFSKIPRTAGSKGRSAVKISQLTLGPKPFEVERLIAIYYAISSPVEKVLTADVFVQIATLASLKMILSASKGVLRSLDSPRYIVNVSREYVLKIADSLSFPLDSYLAG.

42 to 49 serves as a coordination point for ATP; that stretch reads GVASTAKT.

This sequence belongs to the ORC5 family. ORC is composed of six subunits. ORC interacts with cdc18, recruiting it to the ars1 origin of replication.

Its subcellular location is the nucleus. Functionally, component of the origin recognition complex (ORC) that binds origins of replication. It has a role in both chromosomal replication and mating type transcriptional silencing. ORC binds to multiple sites within the ars1 origin of DNA replication in an ATP-independent manner. This Schizosaccharomyces pombe (strain 972 / ATCC 24843) (Fission yeast) protein is Origin recognition complex subunit 5 (orc5).